A 558-amino-acid polypeptide reads, in one-letter code: uncharacterized protein (558 aa).

Transmembrane regions (helical) follow at residues 21–41, 69–89, 100–120, 160–180, 220–240, 251–271, 303–323, 386–406, 413–433, 454–474, 479–499, and 519–539; these read IFCF…LPIA, FLDA…STVV, IVLA…AFLA, IIFL…LFYF, AFQA…IDLI, GLGI…GIGY, VITN…VEFI, VFPV…AMFI, TAGG…VAKF, AFLV…LLPL, PVSF…VGLS, and ALCL…LTFV.

The protein belongs to the TrkH potassium transport family.

Its subcellular location is the cell membrane. This is an uncharacterized protein from Mycoplasma genitalium (strain ATCC 33530 / DSM 19775 / NCTC 10195 / G37) (Mycoplasmoides genitalium).